A 56-amino-acid chain; its full sequence is Photosystem II reaction center protein K (56 aa).

Positions 1 to 19 (MFNIFLDDAFIHSNNPFFG) are excised as a propeptide. The helical transmembrane segment at 35 to 55 (MPIIPVLSFLLAFVWQAAVSF) threads the bilayer.

This sequence belongs to the PsbK family. As to quaternary structure, PSII is composed of 1 copy each of membrane proteins PsbA, PsbB, PsbC, PsbD, PsbE, PsbF, PsbH, PsbI, PsbJ, PsbK, PsbL, PsbM, PsbT, PsbX, PsbY, PsbZ, Psb30/Ycf12, at least 3 peripheral proteins of the oxygen-evolving complex and a large number of cofactors. It forms dimeric complexes.

Its subcellular location is the plastid. It localises to the chloroplast thylakoid membrane. Its function is as follows. One of the components of the core complex of photosystem II (PSII). PSII is a light-driven water:plastoquinone oxidoreductase that uses light energy to abstract electrons from H(2)O, generating O(2) and a proton gradient subsequently used for ATP formation. It consists of a core antenna complex that captures photons, and an electron transfer chain that converts photonic excitation into a charge separation. In Pinus thunbergii (Japanese black pine), this protein is Photosystem II reaction center protein K.